Reading from the N-terminus, the 359-residue chain is Serpentine receptor class epsilon-26 (359 aa).

7 helical membrane passes run 29 to 49 (CAISSAELPFYMLSAYVVFVS), 66 to 86 (IGVPMFGSWFLLIAGKLITIL), 127 to 147 (VAGFLEIHFGFSVIFVGLAIV), 172 to 192 (FIIIYQFLAISISLGILFNIL), 195 to 215 (YVLNASWILCILIGTIMYYYI), 256 to 276 (LVFVVLATIVVMGFGIVALVL), and 282 to 302 (FFMHFGENTLFCYPLYIFLVV).

It belongs to the nematode receptor-like protein sre family.

The protein localises to the membrane. The sequence is that of Serpentine receptor class epsilon-26 (sre-26) from Caenorhabditis elegans.